Here is a 279-residue protein sequence, read N- to C-terminus: Large ribosomal subunit protein uL2 (279 aa).

The tract at residues Gly-222–Thr-264 is disordered.

It belongs to the universal ribosomal protein uL2 family. In terms of assembly, part of the 50S ribosomal subunit. Forms a bridge to the 30S subunit in the 70S ribosome.

Its function is as follows. One of the primary rRNA binding proteins. Required for association of the 30S and 50S subunits to form the 70S ribosome, for tRNA binding and peptide bond formation. It has been suggested to have peptidyltransferase activity; this is somewhat controversial. Makes several contacts with the 16S rRNA in the 70S ribosome. This Caulobacter sp. (strain K31) protein is Large ribosomal subunit protein uL2.